Reading from the N-terminus, the 1145-residue chain is DNA mismatch repair protein msh-3 (1145 aa).

Disordered regions lie at residues 1 to 183 (MAGP…GAKT) and 857 to 879 (SSSA…LAQL). Over residues 13–33 (ASISSFFTPRNTSPLVNLSQN) the composition is skewed to polar residues. A compositionally biased stretch (basic and acidic residues) spans 121–131 (AERKKKEELHR). The span at 158-169 (GEGEEGEDDEEE) shows a compositional bias: acidic residues. Positions 183-307 (TGKLTPMELQ…RKLTNVYTKG (125 aa)) are mispair-binding domain. Residue 882 to 889 (GPNMGGKS) participates in ATP binding. A disordered region spans residues 1030-1056 (KSRTSMDDDAMEVDGDGDGQEGAGADK). Over residues 1036–1048 (DDDAMEVDGDGDG) the composition is skewed to acidic residues.

This sequence belongs to the DNA mismatch repair MutS family. MSH3 subfamily. As to quaternary structure, heterodimer consisting of msh-2-msh-3 (MutS beta). Forms a ternary complex with MutL alpha (mlh-1-pms-1).

Its subcellular location is the nucleus. Its function is as follows. Component of the post-replicative DNA mismatch repair system (MMR). Heterodimerizes with msh-2 to form MutS beta, which binds to DNA mismatches thereby initiating DNA repair. Msh-3 provides substrate-binding and substrate specificity to the complex. When bound, the MutS beta heterodimer bends the DNA helix and shields approximately 20 base pairs. Acts mainly to repair insertion-deletion loops (IDLs) from 2 to 13 nucleotides in size, but can also repair base-base and single insertion-deletion mismatches that occur during replication. After mismatch binding, forms a ternary complex with the MutL alpha heterodimer, which is thought to be responsible for directing the downstream MMR events, including strand discrimination, excision, and resynthesis. ATP binding and hydrolysis play a pivotal role in mismatch repair functions. This Neurospora crassa (strain ATCC 24698 / 74-OR23-1A / CBS 708.71 / DSM 1257 / FGSC 987) protein is DNA mismatch repair protein msh-3 (msh-3).